The sequence spans 69 residues: Bacteriocin microcin B17 (69 aa).

A propeptide spanning residues 1-26 is cleaved from the precursor; that stretch reads MELKASEFGVVLSVDALKLSRQSPLG. The oxazole-4-carboxylic acid (Gly-Ser) cross-link spans 39-40; the sequence is GS. The segment at residues 40–41 is a cross-link (thiazole-4-carboxylic acid (Ser-Cys)); sequence SC. Cross-links (thiazole-4-carboxylic acid (Gly-Cys)) lie at residues 47-48, 50-51, and 54-55; these read GC. A cross-link (oxazole-4-carboxylic acid (Cys-Ser)) is located at residues 55–56; the sequence is CS. 2 consecutive cross-links (oxazole-4-carboxylic acid (Gly-Ser)) follow at residues 61–62 and 64–65; these read GS.

In terms of processing, the processed N-terminus does not resemble a typical secretion signal sequence. Maturation of thiazole and oxazole containing antibiotics involves the enzymatic condensation of a Cys, Ser or Thr with the alpha-carbonyl of the preceding amino acid to form a thioether or ether bond, then dehydration to form a double bond with the alpha-amino nitrogen. Thiazoline or oxazoline rings are dehydrogenated to form thiazole or oxazole rings.

In terms of biological role, this glycine-rich peptide antibiotic inhibits DNA replication in many enteric bacteria, that leads to induction of the SOS repair system, massive DNA degradation and cell death. B17 inhibits type II topoisomerase by trapping an enzyme - DNA cleavable complex. This Escherichia coli protein is Bacteriocin microcin B17 (mcbA).